The chain runs to 205 residues: Basigin (205 aa).

Positions 1 to 18 (MAAALFVLLGFALLGTHG) are cleaved as a signal peptide. The Ig-like C2-type domain occupies 19 to 103 (ASGAAGTVFT…MGTANIQLHG (85 aa)). Topologically, residues 19-205 (ASGAAGTVFT…AIITLRVRSH (187 aa)) are extracellular. 2 disulfide bridges follow: Cys41–Cys87 and Cys126–Cys185. N-linked (GlcNAc...) asparagine glycosylation is found at Asn44, Asn152, and Asn186. The 95-residue stretch at 105–199 (PRVKAVKSSE…SKGSDQAIIT (95 aa)) folds into the Ig-like V-type domain.

Homooligomer. Interacts with VEGFA, KDR/VEGFR2, PPIA/CYPA, SLC16A12, SLC16A11, ATP1B2, MAG, L1CAM and AJAP1. Interacts with SLC16A1; interaction mediates SLC16A1 targeting to the plasma membrane. Interacts with SLC16A3; interaction mediates SLC16A3 targeting to the plasma membrane. Interacts with PPIL2; regulates BSG transport to the cell membrane. Interacts with XKR8; promoting its localization at the cell membrane. Interacts with SLC16A6; this interaction mediates targeting to the plasma membrane.

It localises to the cell membrane. The protein resides in the endoplasmic reticulum membrane. It is found in the basolateral cell membrane. In terms of biological role, signaling receptor for cyclophilins, essential for PPIA/CYPA and PPIB/CYPB-dependent signaling related to chemotaxis and adhesion of immune cells. Plays an important role in targeting the monocarboxylate transporters SLC16A1/GLUT1, SLC16A3, SLC16A8, SLC16A11 and SLC16A12 to the plasma membrane. Acts as a coreceptor for vascular endothelial growth factor receptor 2 (KDR/VEGFR2) in endothelial cells enhancing its VEGFA-mediated activation and downstream signaling. Promotes angiogenesis through EPAS1/HIF2A-mediated up-regulation of VEGFA and KDR/VEGFR2 in endothelial cells. This chain is Basigin (BSG), found in Bos taurus (Bovine).